The sequence spans 164 residues: UPF0178 protein BRADO3147 (164 aa).

Belongs to the UPF0178 family.

This is UPF0178 protein BRADO3147 from Bradyrhizobium sp. (strain ORS 278).